The chain runs to 173 residues: MSAKNPWFWLAAILAIALDRLTKVWVVAQLAPGESIALWPGVFHLTLVKNSGAAFSLFAGGSDWLKWISLLVSVGLCVYALVGPHLGSWEQMGFGLLLGGAVGNGFDRFAFGEVTDFLDFRLIQFPVFNGADIAINLGLACLLIGTLRSESRTPAPARPASKQIREPTDTTGG.

A run of 2 helical transmembrane segments spans residues 67–87 (WISLLVSVGLCVYALVGPHLG) and 92–112 (MGFGLLLGGAVGNGFDRFAFG). Catalysis depends on residues D116 and D132. Residues 125–145 (FPVFNGADIAINLGLACLLIG) form a helical membrane-spanning segment. The tract at residues 151–173 (SRTPAPARPASKQIREPTDTTGG) is disordered. Residues 163–173 (QIREPTDTTGG) are compositionally biased toward basic and acidic residues.

The protein belongs to the peptidase A8 family.

It localises to the cell inner membrane. The catalysed reaction is Release of signal peptides from bacterial membrane prolipoproteins. Hydrolyzes -Xaa-Yaa-Zaa-|-(S,diacylglyceryl)Cys-, in which Xaa is hydrophobic (preferably Leu), and Yaa (Ala or Ser) and Zaa (Gly or Ala) have small, neutral side chains.. Its pathway is protein modification; lipoprotein biosynthesis (signal peptide cleavage). In terms of biological role, this protein specifically catalyzes the removal of signal peptides from prolipoproteins. In Gloeobacter violaceus (strain ATCC 29082 / PCC 7421), this protein is Lipoprotein signal peptidase.